The following is a 305-amino-acid chain: Transmembrane epididymal protein 1 (305 aa).

The chain crosses the membrane as a helical span at residues 4–24 (FIGHISPGLFLVFYGLYQAII). N-linked (GlcNAc...) asparagine glycosylation is present at asparagine 32. Transmembrane regions (helical) follow at residues 51-71 (LWQI…LIVY), 100-120 (LTMF…RSVL), 124-144 (LVLL…LLLV), 159-179 (SLLI…LWAP), 187-207 (IETF…FILF), and 223-243 (IMLV…CMLG). The disordered stretch occupies residues 285–305 (EQQDRDDQAPLLSKSSPCDRA).

Belongs to the TMEM45 family.

It localises to the membrane. This chain is Transmembrane epididymal protein 1 (Teddm1), found in Rattus norvegicus (Rat).